Here is a 59-residue protein sequence, read N- to C-terminus: MGFFNNNPVIEFFHRITRKPSTIAMWVFAGLICSSTFYLMFMSSPTIDFNSKSKKKNDK.

This is an uncharacterized protein from Saccharomyces cerevisiae (strain ATCC 204508 / S288c) (Baker's yeast).